The following is a 290-amino-acid chain: UPF0507 protein YML003W (290 aa).

The protein belongs to the UPF0507 family.

This Saccharomyces cerevisiae (strain ATCC 204508 / S288c) (Baker's yeast) protein is UPF0507 protein YML003W.